Reading from the N-terminus, the 182-residue chain is Vacuolar protein sorting-associated protein 29 (182 aa).

N6-acetyllysine is present on Lys-50.

The protein belongs to the VPS29 family. In terms of assembly, component of the commander complex consisting of the CCC subcomplex and the retriever subcomplex. Component of the heterotrimeric retriever complex formed by VPS26C, VPS29 and VPS35L; within the complex interacts with VPS35L. Component of the heterotrimeric retromer cargo-selective complex (CSC), also described as vacuolar protein sorting subcomplex (VPS), formed by VPS26 (VPS26A or VPS26B), VPS29 and VPS35. The CSC has a highly elongated structure with VPS26 and VPS29 binding independently at opposite distal ends of VPS35 as central platform. The CSC is believed to associate with variable sorting nexins to form functionally distinct retromer complex variants. The originally described retromer complex (also called SNX-BAR retromer) is a pentamer containing the CSC and a heterodimeric membrane-deforming subcomplex formed between SNX1 or SNX2 and SNX5 or SNX6 (also called SNX-BAR subcomplex); the respective CSC and SNX-BAR subcomplexes associate with low affinity. The CSC associates with SNX3 to form a SNX3-retromer complex. The CSC associates with SNX27, the WASH complex and the SNX-BAR subcomplex to form the SNX27-retromer complex. Interacts with VPS26A, VPS35, SNX1, SNX2, SNX3, SNX27, WASHC5. Interacts with TBC1D5; this interaction is blocked by VPS35L in the retriever complex. Interacts with SNX17; the interaction is indirect; SNX17 (via its C-terminus) interacts with the retriever complex (via VPS26C and VPS35L). Interacts with VPS26B and ANKRD27.

The protein localises to the cytoplasm. Its subcellular location is the membrane. It localises to the endosome membrane. The protein resides in the early endosome. It is found in the late endosome. Its function is as follows. Component of the commander complex that is essential for endosomal recycling of transmembrane cargos; the commander complex is composed of the CCC subcomplex and the retriever subcomplex. Component of the retriever complex, which is a heterotrimeric complex related to retromer cargo-selective complex (CSC) and essential for retromer-independent retrieval and recycling of numerous cargos such as integrin alpha-5/beta-1 (ITGA5:ITGB1). Component of the retromer cargo-selective complex (CSC). The CSC is believed to be the core functional component of retromer or respective retromer complex variants acting to prevent missorting of selected transmembrane cargo proteins into the lysosomal degradation pathway. The recruitment of the CSC to the endosomal membrane involves RAB7A and SNX3. The SNX-BAR retromer mediates retrograde transport of cargo proteins from endosomes to the trans-Golgi network (TGN) and is involved in endosome-to-plasma membrane transport for cargo protein recycling. The SNX3-retromer mediates the retrograde endosome-to-TGN transport of WLS distinct from the SNX-BAR retromer pathway. The SNX27-retromer is believed to be involved in endosome-to-plasma membrane trafficking and recycling of a broad spectrum of cargo proteins. The CSC seems to act as recruitment hub for other proteins, such as the WASH complex and TBC1D5. Required to regulate transcytosis of the polymeric immunoglobulin receptor (pIgR-pIgA). In the endosomes, retriever complex drives the retrieval and recycling of NxxY-motif-containing cargo proteins by coupling to SNX17, a cargo essential for the homeostatic maintenance of numerous cell surface proteins associated with processes that include cell migration, cell adhesion, nutrient supply and cell signaling. The recruitment of the retriever complex to the endosomal membrane involves CCC and WASH complexes. Involved in GLUT1 endosome-to-plasma membrane trafficking; the function is dependent of association with ANKRD27. The protein is Vacuolar protein sorting-associated protein 29 of Rattus norvegicus (Rat).